The primary structure comprises 485 residues: Glutamyl-tRNA(Gln) amidotransferase subunit A (485 aa).

Residues Lys79 and Ser154 each act as charge relay system in the active site. The active-site Acyl-ester intermediate is Ser178.

It belongs to the amidase family. GatA subfamily. In terms of assembly, heterotrimer of A, B and C subunits.

It catalyses the reaction L-glutamyl-tRNA(Gln) + L-glutamine + ATP + H2O = L-glutaminyl-tRNA(Gln) + L-glutamate + ADP + phosphate + H(+). Functionally, allows the formation of correctly charged Gln-tRNA(Gln) through the transamidation of misacylated Glu-tRNA(Gln) in organisms which lack glutaminyl-tRNA synthetase. The reaction takes place in the presence of glutamine and ATP through an activated gamma-phospho-Glu-tRNA(Gln). The polypeptide is Glutamyl-tRNA(Gln) amidotransferase subunit A (Geobacillus kaustophilus (strain HTA426)).